Consider the following 327-residue polypeptide: Glycerol-3-phosphate dehydrogenase [NAD(P)+] (327 aa).

The NADPH site is built by F13, R34, and K107. Residues K107 and G135 each coordinate sn-glycerol 3-phosphate. NADPH is bound at residue A139. K190, D243, S253, R254, and N255 together coordinate sn-glycerol 3-phosphate. K190 (proton acceptor) is an active-site residue. R254 is a binding site for NADPH. Residues V276 and E277 each contribute to the NADPH site.

It belongs to the NAD-dependent glycerol-3-phosphate dehydrogenase family.

It is found in the cytoplasm. The catalysed reaction is sn-glycerol 3-phosphate + NAD(+) = dihydroxyacetone phosphate + NADH + H(+). It catalyses the reaction sn-glycerol 3-phosphate + NADP(+) = dihydroxyacetone phosphate + NADPH + H(+). Its pathway is membrane lipid metabolism; glycerophospholipid metabolism. Catalyzes the reduction of the glycolytic intermediate dihydroxyacetone phosphate (DHAP) to sn-glycerol 3-phosphate (G3P), the key precursor for phospholipid synthesis. This chain is Glycerol-3-phosphate dehydrogenase [NAD(P)+], found in Rhizobium etli (strain CIAT 652).